A 240-amino-acid chain; its full sequence is MTAPVPAPRILLPLLLLLLLTPPPGARGEVCMASRGLSLFPESCPDFCCGTCDDQYCCSDVLKKFVWSEERCAVPEASVPASVEPVEQLGSALRFRPGYNDPMSGFGATLAVGLTIFVLSVVTIIICFTCSCCCLYKTCRRPRPVVTTTTSTTVVHAPYPQPPSVPPSYPGPSYQGYHTMPPQPGMPAAPYPMQYPPPYPAQPMGPPAYHETLAGGAAAPYPASQPPYNPAYMDAPKAAL.

Residues 1–28 form the signal peptide; that stretch reads MTAPVPAPRILLPLLLLLLLTPPPGARG. The Extracellular segment spans residues 29-105; the sequence is EVCMASRGLS…RPGYNDPMSG (77 aa). Residues 106–126 traverse the membrane as a helical segment; the sequence is FGATLAVGLTIFVLSVVTIII. Topologically, residues 127-240 are cytoplasmic; sequence CFTCSCCCLY…AYMDAPKAAL (114 aa).

Belongs to the shisa family. Interacts with PDCD6; PDCD6 can stabilize SHISA5.

The protein resides in the endoplasmic reticulum membrane. It is found in the nucleus membrane. Can induce apoptosis in a caspase-dependent manner and plays a role in p53/TP53-dependent apoptosis. In Homo sapiens (Human), this protein is Protein shisa-5 (SHISA5).